The sequence spans 411 residues: Glucose-1-phosphate adenylyltransferase (411 aa).

Residues Gly-162, 177 to 178 (EK), and Ser-195 contribute to the alpha-D-glucose 1-phosphate site.

The protein belongs to the bacterial/plant glucose-1-phosphate adenylyltransferase family. Homotetramer.

It catalyses the reaction alpha-D-glucose 1-phosphate + ATP + H(+) = ADP-alpha-D-glucose + diphosphate. The protein operates within glycan biosynthesis; glycogen biosynthesis. Functionally, involved in the biosynthesis of ADP-glucose, a building block required for the elongation reactions to produce glycogen. Catalyzes the reaction between ATP and alpha-D-glucose 1-phosphate (G1P) to produce pyrophosphate and ADP-Glc. The sequence is that of Glucose-1-phosphate adenylyltransferase from Thermodesulfovibrio yellowstonii (strain ATCC 51303 / DSM 11347 / YP87).